The sequence spans 365 residues: Class I histocompatibility antigen, Gogo-A*0101 alpha chain (365 aa).

Residues 1–24 form the signal peptide; the sequence is MAVMAPRTLVLLLSGALALTQTWA. An alpha-1 region spans residues 25–114; the sequence is GSHSMRYFST…LRGYYNQSED (90 aa). The Extracellular segment spans residues 25–308; sequence GSHSMRYFST…EPSSQPTIPI (284 aa). N-linked (GlcNAc...) asparagine glycosylation occurs at N110. An alpha-2 region spans residues 115–206; it reads GSHTIQRMYG…ENGKETLQRT (92 aa). 2 cysteine pairs are disulfide-bonded: C125–C188 and C227–C283. Residues 207–298 form an alpha-3 region; that stretch reads DAPKTHMTHH…GLPEPLTLRW (92 aa). An Ig-like C1-type domain is found at 209–297; that stretch reads PKTHMTHHAV…EGLPEPLTLR (89 aa). A connecting peptide region spans residues 299 to 308; that stretch reads EPSSQPTIPI. A helical membrane pass occupies residues 309 to 332; that stretch reads VGIIAGLVLFGAVIAGAVVAAVRW. Residues 333–365 are Cytoplasmic-facing; it reads RRKSSDRKGGSYSQAASSDSAQGSDVSLTACKV. The interval 338–365 is disordered; that stretch reads DRKGGSYSQAASSDSAQGSDVSLTACKV. The segment covering 342–359 has biased composition (low complexity); the sequence is GSYSQAASSDSAQGSDVS. S343 bears the Phosphoserine mark. Y344 is modified (phosphotyrosine). Phosphoserine occurs at positions 345, 349, 350, 352, 356, and 359.

It belongs to the MHC class I family. As to quaternary structure, heterodimer of an alpha chain and a beta chain (beta-2-microglobulin).

The protein resides in the membrane. In terms of biological role, involved in the presentation of foreign antigens to the immune system. The chain is Class I histocompatibility antigen, Gogo-A*0101 alpha chain from Gorilla gorilla gorilla (Western lowland gorilla).